The primary structure comprises 175 residues: Cytochrome c homolog (175 aa).

Residues 1 to 8 (MSGKELNK) are Cytoplasmic-facing. Residues 9–29 (IVAAILFASLIAMMVGFVANI) traverse the membrane as a helical; Signal-anchor segment. At 30–175 (LYKPTLELQH…LFLKTYVHDK (146 aa)) the chain is on the periplasmic side. Residues C84, C87, H88, and M150 each contribute to the heme c site.

The protein belongs to the cytochrome c family. Post-translationally, binds 1 heme c group covalently per subunit.

Its subcellular location is the cell membrane. Its function is as follows. May be involved in electron transfer from bc1 complex to aa3. This chain is Cytochrome c homolog (cycM), found in Rickettsia felis (strain ATCC VR-1525 / URRWXCal2) (Rickettsia azadi).